The primary structure comprises 427 residues: Trigger factor (427 aa).

The region spanning 163–248 is the PPIase FKBP-type domain; sequence GDTVVIDFVG…VNEVKAKELP (86 aa).

Belongs to the FKBP-type PPIase family. Tig subfamily.

The protein localises to the cytoplasm. It catalyses the reaction [protein]-peptidylproline (omega=180) = [protein]-peptidylproline (omega=0). Its function is as follows. Involved in protein export. Acts as a chaperone by maintaining the newly synthesized protein in an open conformation. Functions as a peptidyl-prolyl cis-trans isomerase. The protein is Trigger factor of Lactococcus lactis subsp. cremoris (strain MG1363).